A 96-amino-acid chain; its full sequence is uncharacterized protein (96 aa).

The CBS domain maps to 57 to 96 (MTKKVRTTKKDASISDAAALMDKHNVNRLPVVDENNKLVL).

This is an uncharacterized protein from Methanobacterium ivanovii.